The following is a 317-amino-acid chain: Ataxin-3 homolog (317 aa).

The region spanning 7–178 (INSIFFEHQE…RSDADDLISL (172 aa)) is the Josephin domain. The Nucleophile role is filled by Cys-20. His-117 functions as the Proton acceptor in the catalytic mechanism. Asn-132 is a catalytic residue. 2 UIM domains span residues 219-239 (SQEE…KDGS) and 247-264 (EIDE…QAPG). The interval 254–317 (RKAIELSQAP…KKKEERNDEK (64 aa)) is disordered. Positions 276-293 (RSRSSTPPGASEPFSNAE) are enriched in polar residues. Basic and acidic residues predominate over residues 294–317 (QQRRDRQKFLERFEKKKEERNDEK). An interaction with cdc-48.1 and cdc-48.2 region spans residues 296–299 (RRDR).

As to quaternary structure, forms a complex composed of deubiquitinating enzyme atx-3, adapter ubxn-5 and cdc-48.1. Forms a complex composed of deubiquitinating enzyme atx-3, E4 ubiquitin-protein ligase ufd-2 and cdc-48.1. Interacts (via RRDR motif) with cdc-48.1 (via N-terminus) and cdc-48.2 (via N-terminus); the interaction with cdc-48.1 is not required for atx-3 enzymatic activity. Interacts (via C-terminus) with ubxn-5. May interact with ned-8. As to expression, expressed in germline (at protein level). Expressed in spermatheca, pharynx, dorsal and ventral cords, some head neurons, hypodermis, body wall muscles and coelomocytes.

The protein resides in the cytoplasm. It is found in the nucleus. The protein localises to the nucleolus. It carries out the reaction Thiol-dependent hydrolysis of ester, thioester, amide, peptide and isopeptide bonds formed by the C-terminal Gly of ubiquitin (a 76-residue protein attached to proteins as an intracellular targeting signal).. Acts as a chain editing deubiquitinating enzyme that binds and cleaves 'Lys-48'-linked polyubiquitin chains, with a preference for chains containing four or more ubiquitin molecules thereby modulating protein degradation by the ubiquitin-proteasome pathway. Probably by regulating the IGF-1-insulin-like pathway, regulates lifespan. Regulates germline DNA double-strand-break repair and apoptosis in response to DNA damage by recruiting E4 ubiquitin-protein ligase ufd-2 to DNA repair foci. Interacts with key regulators of transcription and represses transcription. Acts as a histone-binding protein that regulates transcription. The protein is Ataxin-3 homolog (atx-3) of Caenorhabditis elegans.